Here is a 445-residue protein sequence, read N- to C-terminus: Phosphoglucosamine mutase (445 aa).

S102 functions as the Phosphoserine intermediate in the catalytic mechanism. Mg(2+) contacts are provided by S102, D241, D243, and D245. Position 102 is a phosphoserine (S102).

Belongs to the phosphohexose mutase family. Mg(2+) serves as cofactor. Post-translationally, activated by phosphorylation.

It carries out the reaction alpha-D-glucosamine 1-phosphate = D-glucosamine 6-phosphate. In terms of biological role, catalyzes the conversion of glucosamine-6-phosphate to glucosamine-1-phosphate. The protein is Phosphoglucosamine mutase of Rhodococcus erythropolis (strain PR4 / NBRC 100887).